Here is a 547-residue protein sequence, read N- to C-terminus: Chaperonin GroEL (547 aa).

ATP-binding positions include 30–33 (TLGP), lysine 51, 87–91 (DGTTT), glycine 415, and aspartate 495. The interval 526 to 547 (QDATPTASPDMGGMGGMGGGMM) is disordered. Residues 537 to 547 (GGMGGMGGGMM) are compositionally biased toward gly residues.

Belongs to the chaperonin (HSP60) family. As to quaternary structure, forms a cylinder of 14 subunits composed of two heptameric rings stacked back-to-back. Interacts with the co-chaperonin GroES.

It is found in the cytoplasm. The catalysed reaction is ATP + H2O + a folded polypeptide = ADP + phosphate + an unfolded polypeptide.. Together with its co-chaperonin GroES, plays an essential role in assisting protein folding. The GroEL-GroES system forms a nano-cage that allows encapsulation of the non-native substrate proteins and provides a physical environment optimized to promote and accelerate protein folding. The chain is Chaperonin GroEL from Vesicomyosocius okutanii subsp. Calyptogena okutanii (strain HA).